The sequence spans 214 residues: Phosphatidylserine decarboxylase proenzyme (214 aa).

Serine 183 (schiff-base intermediate with substrate; via pyruvic acid) is an active-site residue. Serine 183 carries the pyruvic acid (Ser); by autocatalysis modification.

Belongs to the phosphatidylserine decarboxylase family. PSD-A subfamily. In terms of assembly, heterodimer of a large membrane-associated beta subunit and a small pyruvoyl-containing alpha subunit. Requires pyruvate as cofactor. Is synthesized initially as an inactive proenzyme. Formation of the active enzyme involves a self-maturation process in which the active site pyruvoyl group is generated from an internal serine residue via an autocatalytic post-translational modification. Two non-identical subunits are generated from the proenzyme in this reaction, and the pyruvate is formed at the N-terminus of the alpha chain, which is derived from the carboxyl end of the proenzyme. The post-translation cleavage follows an unusual pathway, termed non-hydrolytic serinolysis, in which the side chain hydroxyl group of the serine supplies its oxygen atom to form the C-terminus of the beta chain, while the remainder of the serine residue undergoes an oxidative deamination to produce ammonia and the pyruvoyl prosthetic group on the alpha chain.

Its subcellular location is the cell membrane. The enzyme catalyses a 1,2-diacyl-sn-glycero-3-phospho-L-serine + H(+) = a 1,2-diacyl-sn-glycero-3-phosphoethanolamine + CO2. Its pathway is phospholipid metabolism; phosphatidylethanolamine biosynthesis; phosphatidylethanolamine from CDP-diacylglycerol: step 2/2. Functionally, catalyzes the formation of phosphatidylethanolamine (PtdEtn) from phosphatidylserine (PtdSer). The polypeptide is Phosphatidylserine decarboxylase proenzyme (Desulfotalea psychrophila (strain LSv54 / DSM 12343)).